Reading from the N-terminus, the 426-residue chain is Zona pellucida sperm-binding protein 3 (426 aa).

The N-terminal stretch at methionine 1 to proline 22 is a signal peptide. Glutamine 23 is subject to Pyrrolidone carboxylic acid. The Extracellular segment spans residues glutamine 23–serine 385. The 263-residue stretch at aspartate 43–lysine 305 folds into the ZP domain. Disulfide bonds link cysteine 44/cysteine 138 and cysteine 76/cysteine 97. Residues asparagine 123 and asparagine 145 are each glycosylated (N-linked (GlcNAc...) asparagine). Residues threonine 154, threonine 160, and threonine 161 are each glycosylated (O-linked (GalNAc...) threonine). Disulfide bonds link cysteine 215-cysteine 280 and cysteine 237-cysteine 298. Residue asparagine 244 is glycosylated (N-linked (GlcNAc...) asparagine). The propeptide at arginine 351–glutamine 426 is removed in mature form. The chain crosses the membrane as a helical span at residues valine 386–valine 406. Residues leucine 407–glutamine 426 lie on the Cytoplasmic side of the membrane.

The protein belongs to the ZP domain family. ZPC subfamily. In terms of assembly, polymers of ZP2 and ZP3 organized into long filaments cross-linked by ZP1 homodimers. Interacts with ZP1 and ZP2. In terms of processing, proteolytically cleaved before the transmembrane segment to yield the secreted ectodomain incorporated in the zona pellucida. N-glycosylated. Post-translationally, O-glycosylated; removal of O-linked glycans may play an important role in the post-fertilization block to polyspermy. As to expression, expressed in oocytes.

The protein resides in the zona pellucida. Its subcellular location is the cell membrane. In terms of biological role, component of the zona pellucida, an extracellular matrix surrounding oocytes which mediates sperm binding, induction of the acrosome reaction and prevents post-fertilization polyspermy. The zona pellucida is composed of 3 to 4 glycoproteins, ZP1, ZP2, ZP3, and ZP4. ZP3 is essential for sperm binding and zona matrix formation. The sequence is that of Zona pellucida sperm-binding protein 3 (ZP3) from Canis lupus familiaris (Dog).